Reading from the N-terminus, the 278-residue chain is 4-deoxy-L-threo-5-hexosulose-uronate ketol-isomerase (278 aa).

Positions 196, 198, 203, and 245 each coordinate Zn(2+).

It belongs to the KduI family. In terms of assembly, homohexamer. It depends on Zn(2+) as a cofactor.

It catalyses the reaction 5-dehydro-4-deoxy-D-glucuronate = 3-deoxy-D-glycero-2,5-hexodiulosonate. It participates in glycan metabolism; pectin degradation; 2-dehydro-3-deoxy-D-gluconate from pectin: step 4/5. Functionally, catalyzes the isomerization of 5-dehydro-4-deoxy-D-glucuronate to 3-deoxy-D-glycero-2,5-hexodiulosonate. This Escherichia coli (strain UTI89 / UPEC) protein is 4-deoxy-L-threo-5-hexosulose-uronate ketol-isomerase.